The sequence spans 85 residues: Alpha-toxin Ac2 (85 aa).

Residues 1–19 (MNYLVMISLALLFMTGVES) form the signal peptide. The LCN-type CS-alpha/beta domain occupies 21–83 (KDGYIVDDRN…VRTKGPGRCK (63 aa)). 4 disulfides stabilise this stretch: Cys-31/Cys-82, Cys-35/Cys-55, Cys-41/Cys-65, and Cys-45/Cys-67. Lys-83 carries the post-translational modification Lysine amide.

The protein belongs to the long (4 C-C) scorpion toxin superfamily. Sodium channel inhibitor family. Alpha subfamily. In terms of tissue distribution, expressed by the venom gland.

It localises to the secreted. Its function is as follows. Alpha toxins bind voltage-independently at site-3 of sodium channels (Nav) and inhibit the inactivation of the activated channels, thereby blocking neuronal transmission. This is Alpha-toxin Ac2 from Androctonus crassicauda (Arabian fat-tailed scorpion).